The chain runs to 204 residues: Protein GrpE (204 aa).

A compositionally biased stretch (basic and acidic residues) spans Met-1 to Ala-12. Positions Met-1 to Glu-32 are disordered. Low complexity predominate over residues Glu-17–Gln-26.

Belongs to the GrpE family. In terms of assembly, homodimer.

It localises to the cytoplasm. Functionally, participates actively in the response to hyperosmotic and heat shock by preventing the aggregation of stress-denatured proteins, in association with DnaK and GrpE. It is the nucleotide exchange factor for DnaK and may function as a thermosensor. Unfolded proteins bind initially to DnaJ; upon interaction with the DnaJ-bound protein, DnaK hydrolyzes its bound ATP, resulting in the formation of a stable complex. GrpE releases ADP from DnaK; ATP binding to DnaK triggers the release of the substrate protein, thus completing the reaction cycle. Several rounds of ATP-dependent interactions between DnaJ, DnaK and GrpE are required for fully efficient folding. The sequence is that of Protein GrpE from Pseudoalteromonas atlantica (strain T6c / ATCC BAA-1087).